The primary structure comprises 408 residues: MFVQEEKIFAGKVLRLQVCTMEGAEWLEEVPEDTTVEKLKERCLKHCVPGSLEDPKTVTHHKLIHATSEKVLTDSKTVLEENIQDRDVLLLIKKRAPPPLPKMADVSAEEKRKQEQKAPDKDAILKATANLPSRNVDRTVAQHNMRDFQTELRKILVSLIEVAQKLLALNPDAVELFKKANAMLDEDEEDRVDEIALRQLTEMGFPESRAVKALRLNHMSVTQAMEWLIEHADDPAVDAPLPGQTPSEAAAEAGASSAEATAGPSSEAGGEEAKDELTEIFKKIRRKREFRPDPRAVIALMEMGFDEKEVVDALRVNNNQQNAACEWLLGDRKPSPEDLDKGIDTNSPLFQAILENPVVQLGLTNPKTLLAFEDMLENPLNSTQWMNDPETGPVMLQISRIFQTLNRT.

In terms of domain architecture, Ubiquitin-like spans 14–98 (LRLQVCTMEG…LLLIKKRAPP (85 aa)). Positions 100-119 (LPKMADVSAEEKRKQEQKAP) are disordered. A compositionally biased stretch (basic and acidic residues) spans 108 to 119 (AEEKRKQEQKAP). The UBA 1 domain occupies 185-231 (DEDEEDRVDEIALRQLTEMGFPESRAVKALRLNHMSVTQAMEWLIEH). The disordered stretch occupies residues 235–275 (PAVDAPLPGQTPSEAAAEAGASSAEATAGPSSEAGGEEAKD). The segment covering 245–268 (TPSEAAAEAGASSAEATAGPSSEA) has biased composition (low complexity). In terms of domain architecture, UBA 2 spans 291–331 (RPDPRAVIALMEMGFDEKEVVDALRVNNNQQNAACEWLLGD). One can recognise an STI1 domain in the interval 356–395 (NPVVQLGLTNPKTLLAFEDMLENPLNSTQWMNDPETGPVM).

Component of the KPC complex.

Its subcellular location is the cytoplasm. It participates in protein modification; protein ubiquitination. Functionally, non-catalytic component of the KPC complex, a E3 ubiquitin-protein ligase complex that mediates polyubiquitination of target proteins, such as CDKN1B and NFKB1. Within the KPC complex, UBAC1 acts as an adapter that promotes the transfer of target proteins that have been polyubiquitinated by RNF123/KPC1 to the 26S proteasome. The chain is Ubiquitin-associated domain-containing protein 1 (UBAC1) from Gallus gallus (Chicken).